The chain runs to 144 residues: Small ribosomal subunit protein eS12z (144 aa).

The residue at position 2 (S2) is an N-acetylserine.

Belongs to the eukaryotic ribosomal protein eS12 family.

This chain is Small ribosomal subunit protein eS12z (RPS12A), found in Arabidopsis thaliana (Mouse-ear cress).